The chain runs to 109 residues: Hainantoxin-XVIII-3 (109 aa).

The first 18 residues, 1–18 (MKLSIIIIATSLVIAVVA), serve as a signal peptide directing secretion. Positions 19 to 46 (FPSKDSKAIENDKTEQRMEIVVQETARA) are excised as a propeptide. Intrachain disulfides connect C47-C62, C55-C68, C59-C108, and C61-C81.

Belongs to the neurotoxin 25 family. F7 subfamily. In terms of tissue distribution, expressed by the venom gland.

Its subcellular location is the secreted. In terms of biological role, putative ion channel inhibitor. The protein is Hainantoxin-XVIII-3 of Cyriopagopus hainanus (Chinese bird spider).